The following is a 312-amino-acid chain: Serine/threonine-protein phosphatase CPPED1 (312 aa).

Serine 2 is subject to Phosphoserine. The catalytic stretch occupies residues 47 to 250 (KAWSTGNCDA…AVFSGHYHRN (204 aa)). Aspartate 90, asparagine 127, and histidine 246 together coordinate a divalent metal cation. Serine 293 carries the phosphoserine modification.

This sequence belongs to the metallophosphoesterase superfamily. CPPED1 family. A divalent metal cation serves as cofactor.

The protein resides in the cytoplasm. The enzyme catalyses O-phospho-L-seryl-[protein] + H2O = L-seryl-[protein] + phosphate. It carries out the reaction O-phospho-L-threonyl-[protein] + H2O = L-threonyl-[protein] + phosphate. Functionally, protein phosphatase that dephosphorylates AKT family kinase specifically at 'Ser-473', blocking cell cycle progression and promoting cell apoptosis. May play an inhibitory role in glucose uptake by adipocytes. The chain is Serine/threonine-protein phosphatase CPPED1 (Cpped1) from Mus musculus (Mouse).